A 372-amino-acid polypeptide reads, in one-letter code: NAD(P)H-quinone oxidoreductase subunit 1 (372 aa).

The next 8 helical transmembrane spans lie at 27–47, 97–117, 128–148, 176–196, 204–224, 266–286, 308–328, and 347–367; these read IIWLPLPMLLVLVSAVVGVLV, ILFTAGPILVLVPVILSWLIV, VGIGIFLWIALSSIQPIGLLM, LALSVLAIVLMTNSLSTIDIV, ILSWNIWRQPVGFIIFWICAL, ILSALLVSILYLGGWGFPIPV, SIGIIMTVLKAYLLVFVAILL, and FLLPISLANLLVTAGLKLAFP.

Belongs to the complex I subunit 1 family. In terms of assembly, NDH-1 is composed of at least 11 different subunits.

It is found in the cellular thylakoid membrane. It catalyses the reaction a plastoquinone + NADH + (n+1) H(+)(in) = a plastoquinol + NAD(+) + n H(+)(out). It carries out the reaction a plastoquinone + NADPH + (n+1) H(+)(in) = a plastoquinol + NADP(+) + n H(+)(out). Its function is as follows. NDH-1 shuttles electrons from an unknown electron donor, via FMN and iron-sulfur (Fe-S) centers, to quinones in the respiratory and/or the photosynthetic chain. The immediate electron acceptor for the enzyme in this species is believed to be plastoquinone. Couples the redox reaction to proton translocation, and thus conserves the redox energy in a proton gradient. The polypeptide is NAD(P)H-quinone oxidoreductase subunit 1 (Prochlorococcus marinus subsp. pastoris (strain CCMP1986 / NIES-2087 / MED4)).